We begin with the raw amino-acid sequence, 417 residues long: NADH-quinone oxidoreductase subunit D (417 aa).

It belongs to the complex I 49 kDa subunit family. As to quaternary structure, NDH-1 is composed of 14 different subunits. Subunits NuoB, C, D, E, F, and G constitute the peripheral sector of the complex.

It localises to the cell inner membrane. It carries out the reaction a quinone + NADH + 5 H(+)(in) = a quinol + NAD(+) + 4 H(+)(out). NDH-1 shuttles electrons from NADH, via FMN and iron-sulfur (Fe-S) centers, to quinones in the respiratory chain. The immediate electron acceptor for the enzyme in this species is believed to be ubiquinone. Couples the redox reaction to proton translocation (for every two electrons transferred, four hydrogen ions are translocated across the cytoplasmic membrane), and thus conserves the redox energy in a proton gradient. The chain is NADH-quinone oxidoreductase subunit D from Herminiimonas arsenicoxydans.